The chain runs to 447 residues: Chromosomal replication initiator protein DnaA (447 aa).

The interval 1–70 (MQDFWSKAMD…EEILSEQLGE (70 aa)) is domain I, interacts with DnaA modulators. Positions 70-110 (EPVTLLFAADPALEKPVASKTQTVTPVQSGGETGDQENFHS) are domain II. The disordered stretch occupies residues 87-109 (ASKTQTVTPVQSGGETGDQENFH). A compositionally biased stretch (polar residues) spans 88–99 (SKTQTVTPVQSG). The segment at 111–327 (GLDPRYTFDS…GALIRVSAYA (217 aa)) is domain III, AAA+ region. 4 residues coordinate ATP: glycine 155, glycine 157, lysine 158, and threonine 159. The tract at residues 328-447 (SLTGKPITMA…LASLKSMLQK (120 aa)) is domain IV, binds dsDNA.

The protein belongs to the DnaA family. In terms of assembly, oligomerizes as a right-handed, spiral filament on DNA at oriC.

Its subcellular location is the cytoplasm. Its function is as follows. Plays an essential role in the initiation and regulation of chromosomal replication. ATP-DnaA binds to the origin of replication (oriC) to initiate formation of the DNA replication initiation complex once per cell cycle. Binds the DnaA box (a 9 base pair repeat at the origin) and separates the double-stranded (ds)DNA. Forms a right-handed helical filament on oriC DNA; dsDNA binds to the exterior of the filament while single-stranded (ss)DNA is stabiized in the filament's interior. The ATP-DnaA-oriC complex binds and stabilizes one strand of the AT-rich DNA unwinding element (DUE), permitting loading of DNA polymerase. After initiation quickly degrades to an ADP-DnaA complex that is not apt for DNA replication. Binds acidic phospholipids. In Magnetococcus marinus (strain ATCC BAA-1437 / JCM 17883 / MC-1), this protein is Chromosomal replication initiator protein DnaA.